The following is a 418-amino-acid chain: Serine hydroxymethyltransferase (418 aa).

(6S)-5,6,7,8-tetrahydrofolate-binding positions include leucine 121 and 125-127 (GHL). The residue at position 230 (lysine 230) is an N6-(pyridoxal phosphate)lysine. Residue 356–358 (SPF) participates in (6S)-5,6,7,8-tetrahydrofolate binding.

This sequence belongs to the SHMT family. As to quaternary structure, homodimer. It depends on pyridoxal 5'-phosphate as a cofactor.

The protein resides in the cytoplasm. It catalyses the reaction (6R)-5,10-methylene-5,6,7,8-tetrahydrofolate + glycine + H2O = (6S)-5,6,7,8-tetrahydrofolate + L-serine. It functions in the pathway one-carbon metabolism; tetrahydrofolate interconversion. Its pathway is amino-acid biosynthesis; glycine biosynthesis; glycine from L-serine: step 1/1. In terms of biological role, catalyzes the reversible interconversion of serine and glycine with tetrahydrofolate (THF) serving as the one-carbon carrier. This reaction serves as the major source of one-carbon groups required for the biosynthesis of purines, thymidylate, methionine, and other important biomolecules. Also exhibits THF-independent aldolase activity toward beta-hydroxyamino acids, producing glycine and aldehydes, via a retro-aldol mechanism. The sequence is that of Serine hydroxymethyltransferase from Shewanella halifaxensis (strain HAW-EB4).